Reading from the N-terminus, the 188-residue chain is Phosphatidylcholine-sterol acyltransferase (188 aa).

Asn20 is a glycosylation site (N-linked (GlcNAc...) asparagine). The Charge relay system role is filled by His169.

Belongs to the AB hydrolase superfamily. Lipase family. In terms of tissue distribution, detected in blood plasma (at protein level).

The protein localises to the secreted. The enzyme catalyses a sterol + a 1,2-diacyl-sn-glycero-3-phosphocholine = a sterol ester + a 1-acyl-sn-glycero-3-phosphocholine. The catalysed reaction is a 1-O-alkyl-2-acetyl-sn-glycero-3-phosphocholine + H2O = a 1-O-alkyl-sn-glycero-3-phosphocholine + acetate + H(+). It carries out the reaction a 1-hexadecanoyl-2-acyl-sn-glycero-3-phosphocholine + (24S)-hydroxycholesterol = (24S)-24-hydroxycholesterol ester + 1-hexadecanoyl-sn-glycero-3-phosphocholine. It catalyses the reaction (24S)-hydroxycholesterol + 1-hexadecanoyl-2-(9Z,12Z-octadecadienoyl)-sn-glycero-3-phosphocholine = (24S)-hydroxycholesterol 3-linoleoate + 1-hexadecanoyl-sn-glycero-3-phosphocholine. The enzyme catalyses 1-hexadecanoyl-2-(5Z,8Z,11Z,14Z-eicosatetraenoyl)-sn-glycero-3-phosphocholine + cholesterol = cholesteryl (5Z,8Z,11Z,14Z)-eicosatetraenoate + 1-hexadecanoyl-sn-glycero-3-phosphocholine. The catalysed reaction is 1-hexadecanoyl-2-(9Z-octadecenoyl)-sn-glycero-3-phosphocholine + cholesterol = cholesteryl (9Z-octadecenoate) + 1-hexadecanoyl-sn-glycero-3-phosphocholine. It carries out the reaction 1-hexadecanoyl-2-(8Z,11Z,14Z-eicosatrienoyl)-sn-glycero-3-phosphocholine + cholesterol = cholesteryl (8Z,11Z,14Z)-eicosatrienoate + 1-hexadecanoyl-sn-glycero-3-phosphocholine. It catalyses the reaction 1-hexadecanoyl-2-(5Z,8Z,11Z-eicosatrienoyl)-sn-glycero-3-phosphocholine + cholesterol = cholesteryl (5Z,8Z,11Z)-eicosatrienoate + 1-hexadecanoyl-sn-glycero-3-phosphocholine. The enzyme catalyses 1-hexadecanoyl-2-(5Z,8Z,11Z,14Z,17Z-eicosapentaenoyl)-sn-glycero-3-phosphocholine + cholesterol = (5Z,8Z,11Z,14Z,17Z-eicosapentaenoyl)-cholesterol + 1-hexadecanoyl-sn-glycero-3-phosphocholine. The catalysed reaction is 1-hexadecanoyl-2-(9Z,12Z-octadecadienoyl)-sn-glycero-3-phosphocholine + cholesterol = cholesteryl (9Z,12Z)-octadecadienoate + 1-hexadecanoyl-sn-glycero-3-phosphocholine. It carries out the reaction 1-hexadecanoyl-2-(6Z,9Z,12Z-octadecatrienoyl)-sn-glycero-3-phosphocholine + cholesterol = (6Z,9Z,12Z-octadecatrienoyl)-cholesterol + 1-hexadecanoyl-sn-glycero-3-phosphocholine. It catalyses the reaction 1-hexadecanoyl-2-(11Z,14Z,17Z-eicosatrienoyl)-sn-glycero-3-phosphocholine + cholesterol = (11Z,14Z,17Z-eicosatrienoyl)-cholesterol + 1-hexadecanoyl-sn-glycero-3-phosphocholine. The enzyme catalyses 1-hexadecanoyl-2-(9Z,12Z,15Z-octadecatrienoyl)-sn-glycero-3-phosphocholine + cholesterol = (9Z,12Z,15Z-octadecatrienoyl)-cholesterol + 1-hexadecanoyl-sn-glycero-3-phosphocholine. The catalysed reaction is 1-hexadecanoyl-2-(9Z,12Z-octadecadienoyl)-sn-glycero-3-phosphocholine + H2O = (9Z,12Z)-octadecadienoate + 1-hexadecanoyl-sn-glycero-3-phosphocholine + H(+). It carries out the reaction 1-hexadecanoyl-2-(5Z,8Z,11Z,14Z-eicosatetraenoyl)-sn-glycero-3-phosphocholine + H2O = 1-hexadecanoyl-sn-glycero-3-phosphocholine + (5Z,8Z,11Z,14Z)-eicosatetraenoate + H(+). It catalyses the reaction a 1-O-alkyl-2-acetyl-sn-glycero-3-phosphocholine + 1-hexadecanoyl-sn-glycero-3-phosphocholine = 1-hexadecanoyl-2-acetyl-sn-glycero-3-phosphocholine + a 1-O-alkyl-sn-glycero-3-phosphocholine. Functionally, central enzyme in the extracellular metabolism of plasma lipoproteins. Synthesized mainly in the liver and secreted into plasma where it converts cholesterol and phosphatidylcholines (lecithins) to cholesteryl esters and lysophosphatidylcholines on the surface of high and low density lipoproteins (HDLs and LDLs). The cholesterol ester is then transported back to the liver. Also produced in the brain by primary astrocytes, and esterifies free cholesterol on nascent APOE-containing lipoproteins secreted from glia and influences cerebral spinal fluid (CSF) APOE- and APOA1 levels. Together with APOE and the cholesterol transporter ABCA1, plays a key role in the maturation of glial-derived, nascent lipoproteins. Required for remodeling high-density lipoprotein particles into their spherical forms. Has a preference for plasma 16:0-18:2 or 18:O-18:2 phosphatidylcholines. Catalyzes the hydrolysis of 1-O-alkyl-2-acetyl-sn-glycero-3-phosphocholine (platelet-activating factor or PAF) to 1-O-alkyl-sn-glycero-3-phosphocholine (lyso-PAF). Also catalyzes the transfer of the acetate group from PAF to 1-hexadecanoyl-sn-glycero-3-phosphocholine forming lyso-PAF. Catalyzes the esterification of (24S)-hydroxycholesterol (24(S)OH-C), also known as cerebrosterol to produce 24(S)OH-C monoesters. This Sus scrofa (Pig) protein is Phosphatidylcholine-sterol acyltransferase (LCAT).